Consider the following 123-residue polypeptide: UPF0102 protein PSEEN4497 (123 aa).

The protein belongs to the UPF0102 family.

This is UPF0102 protein PSEEN4497 from Pseudomonas entomophila (strain L48).